The following is a 155-amino-acid chain: Protein-export protein SecB (155 aa).

The protein belongs to the SecB family. Homotetramer, a dimer of dimers. One homotetramer interacts with 1 SecA dimer.

It is found in the cytoplasm. One of the proteins required for the normal export of preproteins out of the cell cytoplasm. It is a molecular chaperone that binds to a subset of precursor proteins, maintaining them in a translocation-competent state. It also specifically binds to its receptor SecA. This chain is Protein-export protein SecB, found in Albidiferax ferrireducens (strain ATCC BAA-621 / DSM 15236 / T118) (Rhodoferax ferrireducens).